The following is a 479-amino-acid chain: Pyruvate kinase (479 aa).

Arg-36 contributes to the substrate binding site. Positions 38, 40, and 70 each coordinate K(+). 38–41 serves as a coordination point for ATP; sequence NFSH. ATP contacts are provided by Arg-77 and Lys-160. Glu-225 is a Mg(2+) binding site. 3 residues coordinate substrate: Gly-251, Asp-252, and Thr-284. Residue Asp-252 participates in Mg(2+) binding.

The protein belongs to the pyruvate kinase family. In terms of assembly, homotetramer. Mg(2+) is required as a cofactor. K(+) serves as cofactor.

It catalyses the reaction pyruvate + ATP = phosphoenolpyruvate + ADP + H(+). It functions in the pathway carbohydrate degradation; glycolysis; pyruvate from D-glyceraldehyde 3-phosphate: step 5/5. Its activity is regulated as follows. Allosterically activated by AMP and by several sugar phosphates. Belongs to type II PK. The chain is Pyruvate kinase (pykA) from Buchnera aphidicola subsp. Baizongia pistaciae (strain Bp).